A 714-amino-acid polypeptide reads, in one-letter code: Delta-like protein 1 (714 aa).

Residues 1-17 (MGRRSALALAVVSALLC) form the signal peptide. At 18 to 537 (QVWSSGVFEL…VAAQGGSFPW (520 aa)) the chain is on the extracellular side. Residues 176–220 (FVCDEHYYGEGCSVFCRPRDDAFGHFTCGERGEKMCDPGWKGQYC) form the DSL domain. 27 cysteine pairs are disulfide-bonded: C178/C187, C191/C203, C211/C220, C225/C236, C229/C242, C244/C253, C256/C267, C262/C273, C275/C284, C291/C303, C297/C313, C315/C324, C331/C342, C336/C351, C353/C362, C369/C380, C374/C390, C392/C401, C408/C419, C413/C428, C430/C439, C446/C457, C451/C466, C468/C477, C484/C495, C489/C504, and C506/C515. 3 consecutive EGF-like domains span residues 225–253 (CLPGCDDQHGYCDKPGECKCRVGWQGRYC), 256–284 (CIRYPGCLHGTCQQPWQCNCQEGWGGLFC), and 291–324 (CTHHKPCRNGATCTNTGQGSYTCSCRPGYTGANC). Positions 331–362 (CAPSPCRNGGSCTDLEDSYSCTCPPGFYGKVC) constitute an EGF-like 4; calcium-binding domain. EGF-like domains are found at residues 369 to 401 (CADGPCFNGGRCSDNPDGGYTCHCPAGFSGFNC) and 408 to 439 (CSSSPCSNGAKCVDLGNSYLCRCQTGFSGRYC). The 32-residue stretch at 446–477 (CASSPCANGGTCRDSVNDFSCTCPPGYTGRNC) folds into the EGF-like 7; calcium-binding domain. N-linked (GlcNAc...) asparagine glycosylation occurs at N476. Residues 484 to 515 (CEHAPCHNGATCHQRGQRYMCECAQGYGGANC) enclose the EGF-like 8 domain. A helical transmembrane segment spans residues 538 to 560 (VAVCAGVVLVLLLLLGCAAVVVC). Residues 561-714 (VRLKLQKHQP…KDECVIATEV (154 aa)) are Cytoplasmic-facing. K605 is covalently cross-linked (Glycyl lysine isopeptide (Lys-Gly) (interchain with G-Cter in ubiquitin)). T630 bears the Phosphothreonine mark. The span at 644–656 (ATVRDAHSKRDTK) shows a compositional bias: basic and acidic residues. The disordered stretch occupies residues 644–690 (ATVRDAHSKRDTKCQSQGSVGEEKSTSTLRGGEVPDRKRPESVYSTS). S685 is subject to Phosphoserine; by PKB. The residue at position 688 (S688) is a Phosphoserine. The interval 711–714 (ATEV) is interaction with MAGI1.

Homodimer. Interacts with TJP1. Interacts with MAGI1 (via PDZ domain); forms a complex with CTNNB1 and CDH2 and promotes recruitment to the adherens junction and stabilization on the cell surface. Interacts with PSEN1; undergoes a presenilin-dependent gamma-secretase cleavage that releases a Dll1-intracellular form. Interacts with MFAP5. Interacts with MIB1. Interacts with NEURL1B; leads to ubiquitination. Interacts with NEURL1. Interacts with SYNJ2BP; enhances DLL1 protein stability, and promotes Notch signaling in endothelial cells. Interacts with MAGI1, MAGI2, MAGI3 and MPDZ. Interacts (via ubiquitin) with EPN1 (via IUM domain); binding with NOTCH1 attached to neighboring cell, promotes ligand ubiquitination and EPN1 interaction, leading to NECD transendocytosis and Notch signaling. Interacts with NOTCH1. In terms of processing, ubiquitinated by MIB (MIB1 or MIB2), leading to its endocytosis and subsequent degradation. Ubiquitinated; promotes recycling back to the plasma membrane and confers a strong affinity for NOTCH1. Mono- and multi-ubiquitinated. Multi-ubiquitination of Lys-605 by MIB1 promotes both cis and trans-interaction with NOTCH1, as well as activation of Notch signaling. Ubiquitinated by NEURL1B. Phosphorylated in a membrane association-dependent manner. Phosphorylation at Ser-688 requires the presence of Ser-685, whereas phosphorylation at Thr-630 and Ser-685 occur independently of the other sites. Phosphorylation is required for full ligand activity in vitro and affects surface presentation, ectodomain shedding, and endocytosis. Post-translationally, O-fucosylated. Can be elongated to a disaccharide by MFNG.

The protein resides in the apical cell membrane. It localises to the cell junction. The protein localises to the adherens junction. It is found in the membrane raft. Transmembrane ligand protein of NOTCH1, NOTCH2 and NOTCH3 receptors that binds the extracellular domain (ECD) of Notch receptor in a cis and trans fashion manner. Following transinteraction, ligand cells produce mechanical force that depends of a clathrin-mediated endocytosis, requiring ligand ubiquitination, EPN1 interaction, and actin polymerisation; these events promote Notch receptor extracellular domain (NECD) transendocytosis and triggers Notch signaling through induction of cleavage, hyperphosphorylation, and nuclear accumulation of the intracellular domain of Notch receptors (NICD). Is required for embryonic development and maintenance of adult stem cells in many different tissues and immune systeme; the DLL1-induced Notch signaling is mediated through an intercellular communication that regulates cell lineage, cell specification, cell patterning and morphogenesis through effects on differentiation and proliferation. Plays a role in brain development at different level, namely by regulating neuronal differentiation of neural precursor cells via cell-cell interaction, most likely through the lateral inhibitory system in an endogenous level dependent-manner. During neocortex development, Dll1-Notch signaling transmission is mediated by dynamic interactions between intermediate neurogenic progenitors and radial glia; the cell-cell interactions are mediated via dynamic and transient elongation processes, likely to reactivate/maintain Notch activity in neighboring progenitors, and coordinate progenitor cell division and differentiation across radial and zonal boundaries. During cerebellar development, regulates Bergmann glial monolayer formation and its morphological maturation through a Notch signaling pathway. At the retina and spinal cord level, regulates neurogenesis by preventing the premature differentiation of neural progenitors and also by maintaining progenitors in spinal cord through Notch signaling pathway. Also controls neurogenesis of the neural tube in a progenitor domain-specific fashion along the dorsoventral axis. Maintains quiescence of neural stem cells and plays a role as a fate determinant that segregates asymmetrically to one daughter cell during neural stem cells mitosis, resulting in neuronal differentiation in Dll1-inheriting cell. Plays a role in immune systeme development, namely the development of all T-cells and marginal zone (MZ) B cells. Blocks the differentiation of progenitor cells into the B-cell lineage while promoting the emergence of a population of cells with the characteristics of a T-cell/NK-cell precursor. Also plays a role during muscle development. During early development, inhibits myoblasts differentiation from the medial dermomyotomal lip and later regulates progenitor cell differentiation. Directly modulates cell adhesion and basal lamina formation in satellite cells through Notch signaling. Maintains myogenic progenitors pool by suppressing differentiation through down-regulation of MYOD1 and is required for satellite cell homing and PAX7 expression. During craniofacial and trunk myogenesis suppresses differentiation of cranial mesoderm-derived and somite-derived muscle via MYOD1 regulation but in cranial mesoderm-derived progenitors, is neither required for satellite cell homing nor for PAX7 expression. Also plays a role during pancreatic cell development. During type B pancreatic cell development, may be involved in the initiation of proximodistal patterning in the early pancreatic epithelium. Stimulates multipotent pancreatic progenitor cells proliferation and pancreatic growth by maintaining HES1 expression and PTF1A protein levels. During fetal stages of development, is required to maintain arterial identity and the responsiveness of arterial endothelial cells for VEGFA through regulation of KDR activation and NRP1 expression. Controls sprouting angiogenesis and subsequent vertical branch formation through regulation on tip cell differentiation. Negatively regulates goblet cell differentiation in intestine and controls secretory fat commitment through lateral inhibition in small intestine. Plays a role during inner ear development; negatively regulates auditory hair cell differentiation. Plays a role during nephron development through Notch signaling pathway. Regulates growth, blood pressure and energy homeostasis. The sequence is that of Delta-like protein 1 (Dll1) from Rattus norvegicus (Rat).